Here is a 270-residue protein sequence, read N- to C-terminus: Pancreas transcription factor 1 subunit alpha (270 aa).

Residues 119 to 171 (QLRQAANVRERRRMQSINDAFEGLRSHIPTLPYEKRLSKVDTLRLAIGYINFL) enclose the bHLH domain.

It localises to the nucleus. Its function is as follows. Transcription factor implicated in the cell fate determination in various organs. Binds to the E-box consensus sequence 5'-CANNTG-3'. Acts together with pdx1 to induce the pancreatic lineage within the endoderm. Plays a central role in directing the differentiation of retinal progenitors towards horizontal and amacrine fates. In Xenopus laevis (African clawed frog), this protein is Pancreas transcription factor 1 subunit alpha (ptf1a).